A 190-amino-acid chain; its full sequence is Dynactin subunit 6 (190 aa).

Threonine 186 carries the post-translational modification Phosphothreonine.

The protein belongs to the dynactin subunits 5/6 family. Dynactin subunit 6 subfamily. As to quaternary structure, subunit of dynactin, a multiprotein complex part of a tripartite complex with dynein and a adapter, such as BICDL1, BICD2 or HOOK3. The dynactin complex is built around ACTR1A/ACTB filament and consists of an actin-related filament composed of a shoulder domain, a pointed end and a barbed end. Its length is defined by its flexible shoulder domain. The soulder is composed of 2 DCTN1 subunits, 4 DCTN2 and 2 DCTN3. The 4 DCNT2 (via N-terminus) bind the ACTR1A filament and act as molecular rulers to determine the length. The pointed end is important for binding dynein-dynactin cargo adapters. Consists of 4 subunits: ACTR10, DCNT4, DCTN5 and DCTN6. Within the complex DCTN6 forms a heterodimer with DCTN5. The barbed end is composed of a CAPZA1:CAPZB heterodimers, which binds ACTR1A/ACTB filament and dynactin and stabilizes dynactin. Interacts with PLK1. Interacts with N4BP2L1. Post-translationally, phosphorylation at Thr-186 by CDK1 during mitotic prometaphase creates a binding site for PLK1 that facilitates its recruitment to kinetochores.

The protein resides in the cytoplasm. It is found in the cytoskeleton. Its subcellular location is the chromosome. The protein localises to the centromere. It localises to the kinetochore. In terms of biological role, part of the dynactin complex that activates the molecular motor dynein for ultra-processive transport along microtubules. In Sus scrofa (Pig), this protein is Dynactin subunit 6 (DCTN6).